A 559-amino-acid polypeptide reads, in one-letter code: Prolyl 4-hydroxylase subunit alpha-1 (559 aa).

Positions 1–16 (MRLALLVLATIGYAVA) are cleaved as a signal peptide. The N-linked (GlcNAc...) asparagine glycan is linked to asparagine 158. Residues 404-512 (TAEELQIANY…KWVSNKWIHE (109 aa)) form the Fe2OG dioxygenase domain. The Fe cation site is built by histidine 422, aspartate 424, and histidine 493. Lysine 503 contacts 2-oxoglutarate.

The protein belongs to the P4HA family. In terms of assembly, heterotetramer of two alpha chains and two beta chains. Exists either as a phy-1(2)/pdi-2(2) tetramer or as a phy-1/phy-2/pdi-2(2) tetramer. It depends on Fe(2+) as a cofactor. The cofactor is L-ascorbate.

It is found in the endoplasmic reticulum lumen. It carries out the reaction L-prolyl-[collagen] + 2-oxoglutarate + O2 = trans-4-hydroxy-L-prolyl-[collagen] + succinate + CO2. Catalyzes the post-translational formation of 4-hydroxyproline in -Xaa-Pro-Gly- sequences in collagens and other proteins. This chain is Prolyl 4-hydroxylase subunit alpha-1 (dpy-18), found in Caenorhabditis elegans.